Here is a 213-residue protein sequence, read N- to C-terminus: MDLTDTQQAILALIAERIETDGVPPSQTEIARAFGFKGVRAAQYHLEALEQAGAIRRVPGQARGIRLAGAAAHARAAPAEEPVRDDVLRLPVLGRVAAGLPIGADIGSDDFVVLDRVFFSPSPDYLLKVQGDSMRDEGIFNGDLIGVHRTRDARSGQIVVARIDEEITVKLLKIGKDRIRLLPRNPDYAPIEVLPDQDFAIEGLYCGLLRPNR.

Residues 27 to 47 constitute a DNA-binding region (H-T-H motif); that stretch reads QTEIARAFGFKGVRAAQYHLE. Residues Ser-133 and Lys-170 each act as for autocatalytic cleavage activity in the active site.

The protein belongs to the peptidase S24 family. Homodimer.

It catalyses the reaction Hydrolysis of Ala-|-Gly bond in repressor LexA.. In terms of biological role, represses a number of genes involved in the response to DNA damage (SOS response), including recA and lexA. In the presence of single-stranded DNA, RecA interacts with LexA causing an autocatalytic cleavage which disrupts the DNA-binding part of LexA, leading to derepression of the SOS regulon and eventually DNA repair. The protein is LexA repressor of Xanthomonas campestris.